The primary structure comprises 401 residues: MQKRLTLLGSTGSIGDSTLDVVARHPERFSVYALSAHRNGDKLVEQCLRFEPEVAVVGDADTAARVAAKLREAGCKTEVTYGPQALVDVSESDGCDTVVAAIVGAAGLAPSLAAARAGKRILLANKEALVMSGAIFMDAVRDNGAVLLPVDSEHNAIFQCLPREAALHGGVSKIILTASGGPFRTREPATLVDVTPEEACKHPNWVMGRKISVDSATMMNKGLEVIEAHWLFDLPGERIDVLIHPQSVIHSLVSYADGSVLAQLGNPDMRTPIAHALAFPDRVDSGVAQLDLAQIASLSFEKPDYARFPCLALAMKALAEGGVASAALNAANEIAVEAFLSRQIGFMAIAQVVDAVLNTLPNRSAHALEDVLEADAAARRAAAEFIARLPDGARRTERAVQ.

Positions 11, 12, 13, 14, 38, 39, and 125 each coordinate NADPH. 1-deoxy-D-xylulose 5-phosphate is bound at residue Lys-126. Glu-127 contacts NADPH. Asp-151 lines the Mn(2+) pocket. 1-deoxy-D-xylulose 5-phosphate-binding residues include Ser-152, Glu-153, Ser-179, and His-202. A Mn(2+)-binding site is contributed by Glu-153. Gly-208 provides a ligand contact to NADPH. 1-deoxy-D-xylulose 5-phosphate-binding residues include Ser-215, Asn-220, Lys-221, and Glu-224. Glu-224 contributes to the Mn(2+) binding site.

This sequence belongs to the DXR family. Requires Mg(2+) as cofactor. The cofactor is Mn(2+).

The catalysed reaction is 2-C-methyl-D-erythritol 4-phosphate + NADP(+) = 1-deoxy-D-xylulose 5-phosphate + NADPH + H(+). It functions in the pathway isoprenoid biosynthesis; isopentenyl diphosphate biosynthesis via DXP pathway; isopentenyl diphosphate from 1-deoxy-D-xylulose 5-phosphate: step 1/6. Catalyzes the NADPH-dependent rearrangement and reduction of 1-deoxy-D-xylulose-5-phosphate (DXP) to 2-C-methyl-D-erythritol 4-phosphate (MEP). The polypeptide is 1-deoxy-D-xylulose 5-phosphate reductoisomerase (Paraburkholderia xenovorans (strain LB400)).